A 1481-amino-acid chain; its full sequence is Cystic fibrosis transmembrane conductance regulator (1481 aa).

Over 1-77 (MQRSPLEKAS…KLINALRRCF (77 aa)) the chain is Cytoplasmic. Residues 78–98 (FWRFMFYGIILYLGEVTKAVQ) traverse the membrane as a helical segment. The ABC transmembrane type-1 1 domain maps to 81 to 365 (FMFYGIILYL…WAVQTWYDSL (285 aa)). Topologically, residues 99–122 (PLLLGRIIASYDPDNKVERSIAIY) are extracellular. A helical membrane pass occupies residues 123-146 (LGIGLCLLFIVRTLLLHPAIFGLH). Residues 147–195 (HIGMQMRIAMFSLIYKKTLKLSSRVLDKISIGQLVSLLSNNLNKFDEGL) are Cytoplasmic-facing. The helical transmembrane segment at 196 to 216 (ALAHFVWIAPLQVTLLMGLLW) threads the bilayer. Residues 217 to 222 (ELLQAF) lie on the Extracellular side of the membrane. A helical membrane pass occupies residues 223 to 243 (TFCGLAFLIVLALLQAGLGKM). Residues 244 to 298 (MMKYRDQRAGKINERLVITSEMIENIQSVKAYCWEEAMEKIIENLRQTELKLTRK) lie on the Cytoplasmic side of the membrane. The helical transmembrane segment at 299-319 (AAYVRYLNSSAFFFSGFFVVF) threads the bilayer. At 320–339 (LSVLPYALLKGIILRKIFTT) the chain is on the extracellular side. The helical transmembrane segment at 340–358 (ISFCIVLRMAVTRQFPWAV) threads the bilayer. Topologically, residues 359 to 858 (QTWYDSLGAI…YLRYITVHKS (500 aa)) are cytoplasmic. ATP contacts are provided by residues Trp-401, 457 to 464 (GSTGAGKT), and Gln-492. The region spanning 423–645 (NGDNSLFFSN…RPDFSSKLMG (223 aa)) is the ABC transporter 1 domain. The S-palmitoyl cysteine moiety is linked to residue Cys-523. The residue at position 548 (Ser-548) is a Phosphoserine. A disordered R region region spans residues 653-831 (TAERRNSIIT…EEINEEDLRD (179 aa)). Ser-659 and Ser-669 each carry phosphoserine; by PKA. Ser-685 is modified (phosphoserine; by PKC). Residue Lys-687 forms a Glycyl lysine isopeptide (Lys-Gly) (interchain with G-Cter in ubiquitin) linkage. Ser-699 bears the Phosphoserine; by PKA mark. Ser-711 carries the post-translational modification Phosphoserine. Residue Thr-716 is modified to Phosphothreonine. A phosphoserine; by PKA mark is found at Ser-736 and Ser-767. A Phosphoserine; by PKC modification is found at Ser-790. Residues Ser-795 and Ser-813 each carry the phosphoserine; by PKA modification. Residues 859–879 (LMFVLIWCLVVFLVEVAASLV) traverse the membrane as a helical segment. In terms of domain architecture, ABC transmembrane type-1 2 spans 859-1155 (LMFVLIWCLV…AVNSSIDVDS (297 aa)). Topologically, residues 880–918 (VLCLFPKIFFQDKGNSTKSANNSYAVIITSTSSYYIFYI) are extracellular. Residues Asn-894 and Asn-900 are each glycosylated (N-linked (GlcNAc...) asparagine). The chain crosses the membrane as a discontinuously helical span at residues 919-939 (YVGVADTLLALGLFRGLPLVH). Topologically, residues 940-990 (TLITVSKTLHHKMLQSVLQAPMSTLNTLKTGGILNRFSKDIAVLDDLLPLT) are cytoplasmic. The chain crosses the membrane as a helical span at residues 991–1011 (IFDFVQLLLIVIGAVVVVSVL). The Extracellular segment spans residues 1012–1013 (QP). A helical transmembrane segment spans residues 1014–1034 (YIFLATVPVIAAFILLRAYFL). Residues 1035–1095 (HTSQQLKQLE…TANWFLYLST (61 aa)) lie on the Cytoplasmic side of the membrane. A helical membrane pass occupies residues 1096–1116 (LRWFQMRIEMIFVIFFIAVTF). At 1117-1130 (ISILTTGEGEGRVG) the chain is on the extracellular side. The chain crosses the membrane as a helical span at residues 1131–1151 (IILTLAMNIMGTLQWAVNSSI). Residues 1152 to 1481 (DVDSLMRSVS…TEEEVQETKL (330 aa)) lie on the Cytoplasmic side of the membrane. The region spanning 1211 to 1444 (MTVKDLTAKY…KSLFRQAISP (234 aa)) is the ABC transporter 2 domain. Residues Tyr-1220 and 1245–1252 (GRTGSGKS) each bind ATP. The interaction with GORASP2 stretch occupies residues 1387–1481 (RTLKQAFANC…TEEEVQETKL (95 aa)). The S-palmitoyl cysteine moiety is linked to residue Cys-1396. A disordered region spans residues 1453 to 1481 (HRNSSRQRSRSNIAALKEETEEEVQETKL). Ser-1457 is subject to Phosphoserine. Residues 1471 to 1481 (ETEEEVQETKL) are compositionally biased toward acidic residues. Positions 1479–1481 (TKL) match the PDZ-binding motif.

This sequence belongs to the ABC transporter superfamily. ABCC family. CFTR transporter (TC 3.A.1.202) subfamily. As to quaternary structure, monomer; does not require oligomerization for channel activity. May form oligomers in the membrane. Interacts with SLC26A3, SLC26A6 and NHERF1. Interacts with SHANK2. Interacts with MYO6. Interacts (via C-terminus) with GOPC (via PDZ domain); this promotes CFTR internalization and thereby decreases channel activity. Interacts with SLC4A7 through NHERF1. Found in a complex with MYO5B and RAB11A. Interacts with ANO1. Interacts with SLC26A8. Interacts with AHCYL1; the interaction increases CFTR activity. Interacts with CSE1L. The core-glycosylated form interacts with GORASP2 (via PDZ GRASP-type 1 domain) in respone to ER stress. Interacts with MARCHF2; the interaction leads to CFTR ubiqtuitination and degradation. Interacts with ADGRG2. N-glycosylated. In terms of processing, phosphorylated; cAMP treatment promotes phosphorylation and activates the channel. Dephosphorylation decreases the ATPase activity (in vitro). Phosphorylation at PKA sites activates the channel. Phosphorylation at PKC sites enhances the response to phosphorylation by PKA. Phosphorylated by AMPK; this inhibits channel activity. Post-translationally, ubiquitinated, leading to its degradation in the lysosome. Deubiquitination by USP10 in early endosomes enhances its endocytic recycling to the cell membrane. Ubiquitinated by RNF185 during ER stress. Ubiquitinated by MARCHF2.

It localises to the apical cell membrane. It is found in the early endosome membrane. The protein resides in the cell membrane. The protein localises to the recycling endosome membrane. Its subcellular location is the endoplasmic reticulum membrane. It localises to the nucleus. It carries out the reaction ATP + H2O + closed Cl(-) channel = ADP + phosphate + open Cl(-) channel.. The enzyme catalyses chloride(in) = chloride(out). The catalysed reaction is hydrogencarbonate(in) = hydrogencarbonate(out). It catalyses the reaction ATP + H2O = ADP + phosphate + H(+). In terms of biological role, epithelial ion channel that plays an important role in the regulation of epithelial ion and water transport and fluid homeostasis. Mediates the transport of chloride ions across the cell membrane. Possesses an intrinsic ATPase activity and utilizes ATP to gate its channel; the passive flow of anions through the channel is gated by cycles of ATP binding and hydrolysis by the ATP-binding domains. The ion channel is also permeable to HCO(3)(-); selectivity depends on the extracellular chloride concentration. Exerts its function also by modulating the activity of other ion channels and transporters. Contributes to the regulation of the pH and the ion content of the epithelial fluid layer. Modulates the activity of the epithelial sodium channel (ENaC) complex, in part by regulating the cell surface expression of the ENaC complex. May regulate bicarbonate secretion and salvage in epithelial cells by regulating the transporter SLC4A7. Can inhibit the chloride channel activity of ANO1. Plays a role in the chloride and bicarbonate homeostasis during sperm epididymal maturation and capacitation. The protein is Cystic fibrosis transmembrane conductance regulator of Bos taurus (Bovine).